A 391-amino-acid chain; its full sequence is tRNA (cytosine(38)-C(5))-methyltransferase (391 aa).

The SAM-dependent MTase C5-type domain occupies 4–391 (LRVLELYSGI…VSKLLTVLCE (388 aa)). Residues 13–15 (IGG), Asp34, 57–58 (IE), and Ser76 each bind S-adenosyl-L-methionine. Cys79 is a catalytic residue. Residue Ser376 coordinates S-adenosyl-L-methionine.

Belongs to the class I-like SAM-binding methyltransferase superfamily. C5-methyltransferase family.

The protein resides in the cytoplasm. The enzyme catalyses cytidine(38) in tRNA + S-adenosyl-L-methionine = 5-methylcytidine(38) in tRNA + S-adenosyl-L-homocysteine + H(+). Specifically methylates cytosine 38 in the anticodon loop of tRNA(Asp). Has higher activity on tRNA(Asp) modified with queuosine at position 34. The protein is tRNA (cytosine(38)-C(5))-methyltransferase (Trdmt1) of Rattus norvegicus (Rat).